An 876-amino-acid polypeptide reads, in one-letter code: MNSTVAPASVADIRKIFLDFFASKGHTVVPSSPLVPGNDPTLMFTNSGMVQFKDVFLGTDKRSYVRAASVQACLRAGGKHNDLENVGYTARHHTFFEMLGNWSFGDYFKRDSLKWGWELLTKVYKLPADKLWATVYIDDDEAYNIWTQEIGLPPERVVRIGDNKGAKYASDNFWMMADTGPCGPCSEIFYDHGPAIAGGPPGSPEQDGDRYIEIWNHVFMQYDMQPDGSVKPLPAPCVDTGMGLERLAAILQHVHSNYEIDIFDALIKAAARETGCTDLGNKSLRVIADHIRATAFLVSDGVLPSNEGRGYVQRRIIRRAIRHGYKLGQKAPFFYKLVPDLVTLMGEAYPGLATQAERIAQVLQAEEERFFETLANGMQILDETLTGDAKVLPGDVAFKLHDTFGFPLDLSADVCRERGVEVDEAGFHAAMEKQKAQGRAAGKFRMDRALEYSGDGNDFVGYERLTEVTKIVALYADSTPVSELKAGQAGVVVLAATPFYGESGGQVGDQGAIFSDGAMFDVADTQKIKADVFGHHGVLKSGALKIGDVVTAHVNASLRAATQRNHSATHLMHKALREVLGAHVQQKGSLVNAERTRFDFAHNAPVTDEQIREVEARVNSEILSNAATQSRVMDIDAAQETGAMMLFGEKYGESVRVLDIGASRELCGGTHVARTGDIGLFKVVAESGVASGVRRIEAVTGQNALSYLQDLEDTVTQVAGTLKAPVVEINERVAGVLDHLKSLEKEIAALKGKLASAQGDELVTQAVDVKGIKVLVAMLEGADTKTLRDTMDKLKDKLKSAVIVLAAVEGDKVQIAAGVTSNSVGKVKAGELVNFVASQVGGKGGGKPDMAMAGGTEPAKLPAALASVMAWVSAKL.

Residues H566, H570, C667, and H671 each coordinate Zn(2+).

The protein belongs to the class-II aminoacyl-tRNA synthetase family. Requires Zn(2+) as cofactor.

It localises to the cytoplasm. It carries out the reaction tRNA(Ala) + L-alanine + ATP = L-alanyl-tRNA(Ala) + AMP + diphosphate. Its function is as follows. Catalyzes the attachment of alanine to tRNA(Ala) in a two-step reaction: alanine is first activated by ATP to form Ala-AMP and then transferred to the acceptor end of tRNA(Ala). Also edits incorrectly charged Ser-tRNA(Ala) and Gly-tRNA(Ala) via its editing domain. This chain is Alanine--tRNA ligase, found in Albidiferax ferrireducens (strain ATCC BAA-621 / DSM 15236 / T118) (Rhodoferax ferrireducens).